Here is a 398-residue protein sequence, read N- to C-terminus: Serine/threonine-protein kinase UL13 (398 aa).

Residues 1 to 10 show a composition bias toward gly residues; that stretch reads MAAGGGGGGV. The interval 1–44 is disordered; it reads MAAGGGGGGVSRAALARPPIHRGTSAPGGAIAAAGGDGDGDEAS. One can recognise a Protein kinase domain in the interval 80 to 398; it reads TGDPVAVGAG…GGARFAELAA (319 aa). ATP contacts are provided by residues 86–94 and lysine 103; that span reads VGAGSYGSV. The active-site Proton acceptor is aspartate 194.

Belongs to the protein kinase superfamily. Ser/Thr protein kinase family. Post-translationally, autophosphorylated.

It localises to the virion tegument. It is found in the host nucleus. The protein localises to the host cytoplasm. Its subcellular location is the host endoplasmic reticulum. It catalyses the reaction L-seryl-[protein] + ATP = O-phospho-L-seryl-[protein] + ADP + H(+). The catalysed reaction is L-threonyl-[protein] + ATP = O-phospho-L-threonyl-[protein] + ADP + H(+). In terms of biological role, multifunctional serine/threonine kinase that plays a role in several processes including egress of virus particles from the nucleus, modulation of the actin cytoskeleton and regulation of viral and cellular gene expression. Regulates the nuclear localization of viral envelopment factors UL34 and UL31, by phosphorylating the US3 kinase, indicating a role in nuclear egress. Disrupts host nuclear lamins, including LMNA and LMNB1. Phosphorylates the viral Fc receptor composed of glycoproteins E (gE) and I (gI). Phosphorylation of glycoprotein E (gE) by UL13 alters its subcellular localization, from the host early endosome to the plasma membrane. Participates in the transcriptional regulation of cellular and viral mRNAs mainly by phosphorylating the viral transcriptional regulator ICP22. Functions as an antagonist of the host RLR-mediated antiviral responses via suppression of the transcription of cytosolic receptors RIGI and IFIH1. Facilitates immune evasion also by recruiting host RNF5 to initiate the 'Lys-27'-/'Lys-29'-linked polyubiquitination of STING1; leading to its degradation. Blocks host IFN-beta transactivation mediated by the cGAS-STING pathway by phosphorylating host IRF3. In turn, IRF3 binding to the IRF3-responsive promoters and downstream interferon stimulated genes/ISG expression are greatly impaired. Induces the activation of the host DNA damage response via H2AX phosphorylation to improve efficient viral replication and progeny production. The chain is Serine/threonine-protein kinase UL13 (UL13) from Suid herpesvirus 1 (strain NIA-3) (SuHV-1).